The chain runs to 1668 residues: Kinesin-like protein KIF21B (1668 aa).

The 364-residue stretch at 8–371 (CVKVAVRIRP…LKYANRARNI (364 aa)) folds into the Kinesin motor domain. 87–94 (GQTGAGKT) serves as a coordination point for ATP. A coiled-coil region spans residues 372-465 (KNKVVVNQDK…LMSQEANLLL (94 aa)). Residues 401–1100 (MEYKAGKRVI…LQALIYNVQH (700 aa)) are interaction with TRIM3. 2 disordered regions span residues 553-629 (KKKE…PEEK) and 837-866 (RVGL…GARS). Residues 579–628 (NSEETDENEAEEEEEERDESGCEEEEGREDEDEDSGSEESLVDSDSDPEE) are compositionally biased toward acidic residues. Serine 580 carries the post-translational modification Phosphoserine. Position 583 is a phosphothreonine (threonine 583). Residues 847–866 (SGAEVSASTTSSEAESGARS) show a composition bias toward low complexity. Residues 924 to 1019 (IIDIVMQRMT…TKEELDSTDT (96 aa)) adopt a coiled-coil conformation. A phosphoserine mark is found at serine 1150, serine 1168, and serine 1217. Polar residues predominate over residues 1199–1219 (LPTRGSTFPRQSRGATDTSPL). The interval 1199 to 1253 (LPTRGSTFPRQSRGATDTSPLTRRKSYDRGQPIRSTDMGFTPPSSPPTRPRNDRN) is disordered. The residue at position 1239 (threonine 1239) is a Phosphothreonine. Serine 1243 is subject to Phosphoserine. WD repeat units follow at residues 1308–1345 (GHTK…EIAA), 1348–1386 (GHPN…KCIR), 1412–1450 (QGEH…PIGK), 1453–1495 (GHIG…TGTI), 1504–1541 (PHYD…LIQQ), 1545–1584 (AHKD…PIGE), and 1587–1624 (GHDS…TPCL).

It belongs to the TRAFAC class myosin-kinesin ATPase superfamily. Kinesin family. Interacts with TRIM3; the interaction positively affects motility of KIF21B. Interacts with GABARAP and GABA(A) receptor subunits: GABRG2, GABRA1 and GABRA2. May interact with GABA(A) receptor subunits: GABRB2 and GABRB3. As to expression, expressed in brain (at protein level). Expressed in spleen and at lower levels in testes.

Its subcellular location is the cytoplasm. The protein localises to the cytoskeleton. It localises to the cell projection. It is found in the dendrite. The protein resides in the growth cone. Its subcellular location is the axon. The protein localises to the cytoplasmic vesicle. Its function is as follows. Plus-end directed microtubule-dependent motor protein which displays processive activity. Is involved in regulation of microtubule dynamics, synapse function and neuronal morphology, including dendritic tree branching and spine formation. Plays a role in lerning and memory. Involved in delivery of gamma-aminobutyric acid (GABA(A)) receptor to cell surface. The protein is Kinesin-like protein KIF21B (Kif21b) of Mus musculus (Mouse).